We begin with the raw amino-acid sequence, 1286 residues long: Galactose/N-acetyl-D-galactosamine lectin heavy subunit 2 (1286 aa).

Residues 1–15 form the signal peptide; the sequence is MKLLLLNILLLCCLA. The Extracellular segment spans residues 16–1227; the sequence is DKLNEFSADI…NNVGAIAAAT (1212 aa). Residues asparagine 200, asparagine 331, asparagine 384, asparagine 462, asparagine 652, asparagine 883, asparagine 1197, and asparagine 1207 are each glycosylated (N-linked (GlcNAc...) asparagine). Residues 1228 to 1248 form a helical membrane-spanning segment; it reads TVAVVVVAVVVALIVVSIGLF. At 1249–1286 the chain is on the cytoplasmic side; it reads KTYQLVSSAMKNAITTTNENAEYVGADNEATNAATYNG.

Heterodimer composed of a 170 kDa heavy subunit (hgl) and a 31/35 kDa light subunit (lgl); disulfide-linked. N-glycosylated.

The protein resides in the cell membrane. Lectin which binds galactose and N-acetyl-D-galactosamine of host glycoproteins and thus mediates adhesion to host cells. Mediates adherence to host colonic mucins, an essential step for pathogenic tissue invasion. The protein is Galactose/N-acetyl-D-galactosamine lectin heavy subunit 2 of Entamoeba histolytica (strain ATCC 30459 / HM-1:IMSS / ABRM).